A 101-amino-acid polypeptide reads, in one-letter code: Large ribosomal subunit protein uL23c (101 aa).

The protein belongs to the universal ribosomal protein uL23 family. In terms of assembly, part of the 50S ribosomal subunit.

It is found in the plastid. It localises to the chloroplast. In terms of biological role, binds to 23S rRNA. The protein is Large ribosomal subunit protein uL23c (rpl23) of Cyanidium caldarium (Red alga).